A 149-amino-acid chain; its full sequence is 3-hydroxyacyl-[acyl-carrier-protein] dehydratase FabZ (149 aa).

Residue His49 is part of the active site.

The protein belongs to the thioester dehydratase family. FabZ subfamily.

The protein localises to the cytoplasm. The catalysed reaction is a (3R)-hydroxyacyl-[ACP] = a (2E)-enoyl-[ACP] + H2O. In terms of biological role, involved in unsaturated fatty acids biosynthesis. Catalyzes the dehydration of short chain beta-hydroxyacyl-ACPs and long chain saturated and unsaturated beta-hydroxyacyl-ACPs. This is 3-hydroxyacyl-[acyl-carrier-protein] dehydratase FabZ from Sulfurovum sp. (strain NBC37-1).